The following is a 180-amino-acid chain: Superoxide dismutase [Cu-Zn] (180 aa).

An N-terminal signal peptide occupies residues 1-19 (MFMNLLSQVSNAIFPQVEA). The Cu cation site is built by H68, H70, and H85. A disulfide bridge links C79 with C171. The Zn(2+) site is built by H85, H93, H102, and D105. H142 provides a ligand contact to Cu cation.

It belongs to the Cu-Zn superoxide dismutase family. Homodimer. Cu cation is required as a cofactor. Zn(2+) serves as cofactor.

Its subcellular location is the cytoplasm. It carries out the reaction 2 superoxide + 2 H(+) = H2O2 + O2. Its function is as follows. Destroys radicals which are normally produced within the cells and which are toxic to biological systems. Required for normal brood size. May be involved in regulating mpk-1 phosphorylation downstream of phosphatase ptp-2 during oocyte maturation. In Caenorhabditis briggsae, this protein is Superoxide dismutase [Cu-Zn].